A 292-amino-acid chain; its full sequence is 4-hydroxy-tetrahydrodipicolinate synthase (292 aa).

Thr45 contributes to the pyruvate binding site. Tyr133 functions as the Proton donor/acceptor in the catalytic mechanism. Lys161 (schiff-base intermediate with substrate) is an active-site residue. Position 203 (Ile203) interacts with pyruvate.

The protein belongs to the DapA family. In terms of assembly, homotetramer; dimer of dimers.

It is found in the cytoplasm. The catalysed reaction is L-aspartate 4-semialdehyde + pyruvate = (2S,4S)-4-hydroxy-2,3,4,5-tetrahydrodipicolinate + H2O + H(+). It functions in the pathway amino-acid biosynthesis; L-lysine biosynthesis via DAP pathway; (S)-tetrahydrodipicolinate from L-aspartate: step 3/4. In terms of biological role, catalyzes the condensation of (S)-aspartate-beta-semialdehyde [(S)-ASA] and pyruvate to 4-hydroxy-tetrahydrodipicolinate (HTPA). This chain is 4-hydroxy-tetrahydrodipicolinate synthase, found in Vibrio cholerae serotype O1 (strain M66-2).